The primary structure comprises 102 residues: Small ribosomal subunit protein uS10 (102 aa).

Belongs to the universal ribosomal protein uS10 family. As to quaternary structure, part of the 30S ribosomal subunit.

In terms of biological role, involved in the binding of tRNA to the ribosomes. This chain is Small ribosomal subunit protein uS10, found in Kosmotoga olearia (strain ATCC BAA-1733 / DSM 21960 / TBF 19.5.1).